A 403-amino-acid polypeptide reads, in one-letter code: MPREIAMYNLPDAHGHFGPYGGTFVAETLSHALDELRDAYARYQHDPEFIKEYEYELKHFVGRPSPIYHARRLTEHCGGAQIYLKREDLNHTGAHKVNNVIGQALLARRMGKPRVIAETGAGQHGVATATIAARYGMECVVYMGSEDVRRQAANVYRMKLLGATVVPVESGSRTLKDALNEAMRDWVTNVADTFYIIGTVAGPHPYPMMVRDFQAVIGEECKVQMPELAGRQPDAVIACVGGGSNAMGIFYPYIDHASVQLIGVEAAGEGLESGRHAASLTGGSPGVLHGNRTYLLQDEDGQIIETHSISAGLDYPGVGPEHAWLKDAGRAQYVGITDKEALQAFHDLCRMEGIIPALESSHALAYACKLAPTLPKDKILLVNLSGRGDKDMHTVAELSGIDL.

Lys96 carries the post-translational modification N6-(pyridoxal phosphate)lysine.

This sequence belongs to the TrpB family. Tetramer of two alpha and two beta chains. Pyridoxal 5'-phosphate is required as a cofactor.

The enzyme catalyses (1S,2R)-1-C-(indol-3-yl)glycerol 3-phosphate + L-serine = D-glyceraldehyde 3-phosphate + L-tryptophan + H2O. The protein operates within amino-acid biosynthesis; L-tryptophan biosynthesis; L-tryptophan from chorismate: step 5/5. Functionally, the beta subunit is responsible for the synthesis of L-tryptophan from indole and L-serine. In Ralstonia nicotianae (strain ATCC BAA-1114 / GMI1000) (Ralstonia solanacearum), this protein is Tryptophan synthase beta chain.